A 185-amino-acid polypeptide reads, in one-letter code: Homeobox protein TGIF2LY (185 aa).

2 disordered regions span residues 1 to 58 (MEAA…GNLP) and 166 to 185 (RCQE…SSPE). Positions 21 to 39 (AKTQSPAQDTSIMSRNNAD) are enriched in polar residues. The segment at residues 48–111 (EHKKKRKGNL…INARRRILPD (64 aa)) is a DNA-binding region (homeobox; TALE-type).

The protein belongs to the TALE/TGIF homeobox family. In terms of tissue distribution, specifically expressed in adult testis.

The protein localises to the nucleus. Its function is as follows. May have a transcription role in testis. May act as a competitor/regulator of TGIF2LX. The chain is Homeobox protein TGIF2LY (TGIF2LY) from Homo sapiens (Human).